We begin with the raw amino-acid sequence, 1374 residues long: DNA-directed RNA polymerase subunit beta (1374 aa).

Belongs to the RNA polymerase beta chain family. The RNAP catalytic core consists of 2 alpha, 1 beta, 1 beta' and 1 omega subunit. When a sigma factor is associated with the core the holoenzyme is formed, which can initiate transcription.

The catalysed reaction is RNA(n) + a ribonucleoside 5'-triphosphate = RNA(n+1) + diphosphate. Functionally, DNA-dependent RNA polymerase catalyzes the transcription of DNA into RNA using the four ribonucleoside triphosphates as substrates. The chain is DNA-directed RNA polymerase subunit beta from Rhodopseudomonas palustris (strain TIE-1).